The following is a 942-amino-acid chain: Homeobox protein 2 (942 aa).

Composition is skewed to low complexity over residues 32-87 and 98-130; these read ECNE…NINE and SPYS…SPIP. Disordered regions lie at residues 32 to 149, 161 to 494, 537 to 580, and 609 to 942; these read ECNE…PQNI, LESP…RLKK, RQEK…QGGA, and FKNN…CQQN. A compositionally biased stretch (polar residues) spans 131-149; that stretch reads NTNFKQSGEYQSIPSPQNI. Low complexity predominate over residues 163–261; sequence SPNSSNSSPS…PSSNLSKSNS (99 aa). Polar residues predominate over residues 269 to 290; the sequence is QAPSNTSSPQLLSPNHNQQRIS. 2 stretches are compositionally biased toward low complexity: residues 299-430 and 450-464; these read NNNH…NSSP and NNNN…SNSS. The span at 465–481 shows a compositional bias: polar residues; that stretch reads FDEYQPQQKVSRSNSPN. The homeobox DNA-binding region spans 485-544; it reads EKKRRTRLKKEQADILKTFFDNDDYPTKDDKETLANRLGMSYCAVTTWFSNKRQEKKRRG. Low complexity-rich tracts occupy residues 609-621, 628-685, 694-737, 752-764, 776-864, and 890-927; these read FKNN…NKNV, NNNN…GSSD, NNNN…NNNN, SDDT…YLNN, and NNFN…NDNN. Residues 835-865 are a coiled coil; that stretch reads NNNNNNNNQNNNNNNNNNQYNNNNKNYLNNI.

Its subcellular location is the nucleus. Its function is as follows. Putative transcription factor that may potentiate the function of warA. The protein is Homeobox protein 2 (hbx2) of Dictyostelium discoideum (Social amoeba).